The primary structure comprises 967 residues: Isoleucine--tRNA ligase 2 (967 aa).

A 'HIGH' region motif is present at residues 58 to 68 (PYANGDIHIGH). A compositionally biased stretch (low complexity) spans 437–446 (AVTEEAGATG). Positions 437–466 (AVTEEAGATGEARKVGKAEEAEEAGPAKTL) are disordered. Glu598 provides a ligand contact to L-isoleucyl-5'-AMP. Residues 639–643 (KMSKS) carry the 'KMSKS' region motif. Lys642 is an ATP binding site. Cys922, Cys925, Cys942, and Cys945 together coordinate Zn(2+).

Belongs to the class-I aminoacyl-tRNA synthetase family. IleS type 1 subfamily. Monomer. The cofactor is Zn(2+).

It localises to the cytoplasm. It carries out the reaction tRNA(Ile) + L-isoleucine + ATP = L-isoleucyl-tRNA(Ile) + AMP + diphosphate. Its function is as follows. Catalyzes the attachment of isoleucine to tRNA(Ile). As IleRS can inadvertently accommodate and process structurally similar amino acids such as valine, to avoid such errors it has two additional distinct tRNA(Ile)-dependent editing activities. One activity is designated as 'pretransfer' editing and involves the hydrolysis of activated Val-AMP. The other activity is designated 'posttransfer' editing and involves deacylation of mischarged Val-tRNA(Ile). The chain is Isoleucine--tRNA ligase 2 from Burkholderia mallei (strain ATCC 23344).